The chain runs to 263 residues: Acetylglutamate kinase (263 aa).

Residues 48-49 (GG), Arg70, and Asn162 each bind substrate.

This sequence belongs to the acetylglutamate kinase family. ArgB subfamily.

It is found in the cytoplasm. It catalyses the reaction N-acetyl-L-glutamate + ATP = N-acetyl-L-glutamyl 5-phosphate + ADP. It functions in the pathway amino-acid biosynthesis; L-arginine biosynthesis; N(2)-acetyl-L-ornithine from L-glutamate: step 2/4. Catalyzes the ATP-dependent phosphorylation of N-acetyl-L-glutamate. The sequence is that of Acetylglutamate kinase from Shewanella sediminis (strain HAW-EB3).